A 191-amino-acid polypeptide reads, in one-letter code: UPF0312 protein PSPA7_0523 (191 aa).

The N-terminal stretch at 1-23 (MLKKTLAALALGSALFTAGQAMA) is a signal peptide.

It belongs to the UPF0312 family. Type 1 subfamily.

It localises to the periplasm. This chain is UPF0312 protein PSPA7_0523, found in Pseudomonas paraeruginosa (strain DSM 24068 / PA7) (Pseudomonas aeruginosa (strain PA7)).